Reading from the N-terminus, the 103-residue chain is c-Myc-binding protein (103 aa).

The protein belongs to the AMY1 family. As to quaternary structure, binds via its C-terminal region to the N-terminal region of MYC. Associates with AKAP1/S-AKAP84. Interacts with MYCBPAP. Interacts with CFAP91. Highly expressed in heart, placenta, pancreas, skeletal muscle and kidney. Also present at low levels in lung.

It localises to the cytoplasm. The protein localises to the nucleus. It is found in the mitochondrion. Its function is as follows. May control the transcriptional activity of MYC. Stimulates the activation of E box-dependent transcription by MYC. This Homo sapiens (Human) protein is c-Myc-binding protein.